Consider the following 261-residue polypeptide: 3-methyl-2-oxobutanoate hydroxymethyltransferase (261 aa).

Mg(2+) is bound by residues aspartate 42 and aspartate 81. 3-methyl-2-oxobutanoate is bound by residues 42–43, aspartate 81, and lysine 110; that span reads DS. Glutamate 112 contacts Mg(2+). Glutamate 179 (proton acceptor) is an active-site residue.

Belongs to the PanB family. Homodecamer; pentamer of dimers. It depends on Mg(2+) as a cofactor.

Its subcellular location is the cytoplasm. It carries out the reaction 3-methyl-2-oxobutanoate + (6R)-5,10-methylene-5,6,7,8-tetrahydrofolate + H2O = 2-dehydropantoate + (6S)-5,6,7,8-tetrahydrofolate. Its pathway is cofactor biosynthesis; (R)-pantothenate biosynthesis; (R)-pantoate from 3-methyl-2-oxobutanoate: step 1/2. In terms of biological role, catalyzes the reversible reaction in which hydroxymethyl group from 5,10-methylenetetrahydrofolate is transferred onto alpha-ketoisovalerate to form ketopantoate. The sequence is that of 3-methyl-2-oxobutanoate hydroxymethyltransferase from Thermus thermophilus (strain ATCC 27634 / DSM 579 / HB8).